Reading from the N-terminus, the 745-residue chain is Copper-transporting ATPase (745 aa).

In terms of domain architecture, HMA spans 1–67 (MKESFYIEGM…LIEKLGYSPK (67 aa)). Topologically, residues 1–83 (MKESFYIEGM…KKEFFSPNVK (83 aa)) are cytoplasmic. Cysteine 12 and cysteine 15 together coordinate Cu cation. A helical membrane pass occupies residues 84–104 (LALAVIFTLFVVYLSMGAMLS). The Extracellular portion of the chain corresponds to 105 to 124 (PSLLPESLLAIDNHSNFLNA). Residues 125 to 144 (CLQLIGALIVMHLGRDFYIQ) traverse the membrane as a helical segment. At 145-151 (GFKALWH) the chain is on the cytoplasmic side. A helical membrane pass occupies residues 152–172 (RQPNMSSLIAIGTSAALISSL). Topologically, residues 173 to 194 (WQLYLVYTNHYTDQWSYGHYYF) are extracellular. A helical transmembrane segment spans residues 195-215 (ESVCVILMFVMVGKRIENVSK). Residues 216–343 (DKALDAMQAL…KAEISRLADK (128 aa)) are Cytoplasmic-facing. A helical transmembrane segment spans residues 344-366 (VSSVFVPSVIAISILAFVVWLII). Residues 367-379 (APKPDFWWNFGIA) are Extracellular-facing. The chain crosses the membrane as a helical span at residues 380–397 (LEVFVSVLVISCPCALGL). The Cytoplasmic portion of the chain corresponds to 398-685 (ATPMSILVAN…KLSQATIKNI (288 aa)). The active-site 4-aspartylphosphate intermediate is aspartate 435. Positions 631 and 635 each coordinate Mg(2+). The chain crosses the membrane as a helical span at residues 686-705 (KENLFWAFCYNSVFIPLACG). Over 706–716 (VLYKANLMLSP) the chain is Extracellular. Residues 717 to 735 (AIAGLAMSLSSVSVVLNSQ) form a helical membrane-spanning segment. The Cytoplasmic segment spans residues 736 to 745 (RLRNFKIKDH).

Belongs to the cation transport ATPase (P-type) (TC 3.A.3) family. Type IB subfamily.

The protein localises to the cell membrane. The enzyme catalyses Cu(2+)(in) + ATP + H2O = Cu(2+)(out) + ADP + phosphate + H(+). Probably involved in copper export. The chain is Copper-transporting ATPase (copA) from Helicobacter pylori (strain ATCC 700392 / 26695) (Campylobacter pylori).